The sequence spans 919 residues: MVRLRTLVRAIAAASVLTSGMAHGLGLGEITLKSALNQPLDAEIELLEVRDLGSGEVIPSLASPEEFSKAGVDRLYYLTDLKFTPVVKPNGKSVIRVTSSKPVQEPYLNFLVQVLWPNGRLLREYTVLLDPPLYSPQAAASAPQAPVSAPRATGAPRAPQAPAPVRTTAPAGSDTYRTVSNDTLWEIAQRNRTDRVSVPQAMLAFQELNPGAFVDGNINRLKSGQVLRIPTEQQMLERSPREALSQVQAQNQSWRGSRNPAAGSAGARQLDATQRNAAGSAPSKVDATDNLRLVSGEGKASKGADKGGKGDSKAIADTLAVTKESLDSTRRENEELQSRMQDLQSQLDKLQKLIQLKDAQLAKLQGQLGAEGQGAAQPNAALPDASQPNAAAQAPAQPGTPAAAAPTPAPAGEAPAAPAQPPVAPPPAPAAEKPPAPAVPAPAPVQAAEQPAPSFLDELLANPLWLAVIGGSALLALLVLLMILSRRNAQKEKEEAQAFAADTGEEQEDALDLGKDGFDDLTLDEPEPQVAAVAPQVEKTTAQTSDALGEADIYIAYGRFNQAAELLQNAIYDEPQRTDLRLKLMEVYAEMGDREGFARQENELREIGGAQPQVEQLKSRYPAMVAVAAVAGLAGAKLAQDELDSFSLDDLSLDDSGHAAKPDAAGQDLDDAFDLSLDDLGGDDVQADLKSDSGALDDLTLDSDLDLAASTPADKPVDDLDFGLDFAELAETPSQPKHDDLGDFSLDLDAPEDKLSDDDFLLSLNDEVPAAAPADNEFTLDTEAAEEPALSLPDDFDLSLADEPTEPAAPEKGEDSFAAQLDEVSAQLDELASNLDEPKSATPSFSAEDAAVASALDGDADDDFDFLSGADEAATKLDLARAYIDMGDSEGARDILDEVLAEGNDSQQAEARELLERLA.

A signal peptide spans 1–24 (MVRLRTLVRAIAAASVLTSGMAHG). The span at 140–171 (ASAPQAPVSAPRATGAPRAPQAPAPVRTTAPA) shows a compositional bias: low complexity. Disordered stretches follow at residues 140–177 (ASAP…DTYR) and 237–312 (ERSP…KGDS). In terms of domain architecture, LysM spans 174-229 (DTYRTVSNDTLWEIAQRNRTDRVSVPQAMLAFQELNPGAFVDGNINRLKSGQVLRI). Polar residues predominate over residues 245-256 (SQVQAQNQSWRG). Residues 299 to 312 (KASKGADKGGKGDS) are compositionally biased toward basic and acidic residues. A coiled-coil region spans residues 319-367 (LAVTKESLDSTRRENEELQSRMQDLQSQLDKLQKLIQLKDAQLAKLQGQ). The tract at residues 372–445 (GQGAAQPNAA…APAVPAPAPV (74 aa)) is disordered. Positions 390–417 (AAAQAPAQPGTPAAAAPTPAPAGEAPAA) are enriched in low complexity. The span at 418 to 443 (PAQPPVAPPPAPAAEKPPAPAVPAPA) shows a compositional bias: pro residues. A helical transmembrane segment spans residues 464-484 (LWLAVIGGSALLALLVLLMIL). Positions 785 to 816 (AEEPALSLPDDFDLSLADEPTEPAAPEKGEDS) are disordered.

Interacts with FimL. Interacts with DgcP.

The protein resides in the cell inner membrane. In terms of biological role, inner membrane hub protein that plays both cAMP-dependent and cAMP-independent roles in twitching motility. Regulates intracellular cyclic AMP (cAMP) levels through the activation of adenylate cyclase CyaB. Plays an essential role in a number of virulence mechanisms including type IV pilus (T4P)-mediated assembly and twitching motility as well as cAMP-dependent virulence gene expression. Also mediates type II secretion (T2S) of lipases and proteases. In addition, mediates the cAMP-independent localization of multiple T4P structural and regulatory components to the cell poles. This role in directing proteins to the cell pole is not restricted to type IV component and involves other proteins such as the diguanylate cyclase DgcP. This is Motility hub protein FimV (fimV) from Pseudomonas aeruginosa (strain ATCC 15692 / DSM 22644 / CIP 104116 / JCM 14847 / LMG 12228 / 1C / PRS 101 / PAO1).